Reading from the N-terminus, the 114-residue chain is T-cell leukemia/lymphoma protein 1A (114 aa).

The protein belongs to the TCL1 family. As to quaternary structure, homodimer. Interacts with AKT1, AKT2 and AKT3 (via PH domain). Interacts with PNPT1; the interaction has no effect on PNPT1 exonuclease activity. As to expression, restricted in the T-cell lineage to immature thymocytes and activated peripheral lymphocytes. Preferentially expressed early in T- and B-lymphocyte differentiation.

The protein localises to the cytoplasm. The protein resides in the nucleus. Its subcellular location is the microsome. It localises to the endoplasmic reticulum. Enhances the phosphorylation and activation of AKT1, AKT2 and AKT3. Promotes nuclear translocation of AKT1. Enhances cell proliferation, stabilizes mitochondrial membrane potential and promotes cell survival. The sequence is that of T-cell leukemia/lymphoma protein 1A (TCL1A) from Homo sapiens (Human).